The primary structure comprises 638 residues: Autolysin (638 aa).

The N-terminal stretch at 1 to 28 is a signal peptide; sequence MSLATRRFGAAAALLVAACVLCTAPAWA. Residues 29-183 constitute a propeptide, activation peptide; sequence QNETTGTGMV…LKSILKGSQK (155 aa). An N-linked (GlcNAc...) asparagine glycan is attached at N30. The short motif at 95–102 is the Cysteine switch element; it reads PRCNVPRA. C97 is a Zn(2+) binding site. A glycan (N-linked (GlcNAc...) asparagine) is linked at N126. Residues 269 to 292 form a disordered region; the sequence is VTPPPRPPRPPRPPPRAGSTISSL. Over residues 270 to 284 the composition is skewed to pro residues; it reads TPPPRPPRPPRPPPR. N-linked (GlcNAc...) asparagine glycosylation occurs at N296. Residue H396 participates in Zn(2+) binding. E397 is an active-site residue. The Zn(2+) site is built by H400 and H406. N-linked (GlcNAc...) asparagine glycosylation is found at N458, N465, N470, and N523.

This sequence belongs to the peptidase M11 family. Zn(2+) is required as a cofactor. Post-translationally, present in 2 forms: an inactive V-form in vegetative cells and an active and soluble G-form. The V-form enzyme may be converted to the G-form enzyme during gametic differentiation under nitrogen-starved conditions.

The protein resides in the periplasm. It is found in the secreted. It localises to the cell wall. The catalysed reaction is Cleavage of the proline- and hydroxyproline-rich proteins of the Chlamydomonas cell wall. Also cleaves azocasein, gelatin and Leu-Trp-Met-|-Arg-Phe-Ala.. Functionally, mediates digestion of the cell walls of the 2 mating type gametes during mating as a necessary prelude to cell fusion. This enzyme acts specifically on the framework proteins (inner wall) of the cell wall, cleaving several model peptides at specific sites. This is Autolysin from Chlamydomonas reinhardtii (Chlamydomonas smithii).